Consider the following 130-residue polypeptide: Small ribosomal subunit protein uS11 (130 aa).

It belongs to the universal ribosomal protein uS11 family. In terms of assembly, part of the 30S ribosomal subunit. Interacts with proteins S7 and S18. Binds to IF-3.

Functionally, located on the platform of the 30S subunit, it bridges several disparate RNA helices of the 16S rRNA. Forms part of the Shine-Dalgarno cleft in the 70S ribosome. The protein is Small ribosomal subunit protein uS11 of Gluconobacter oxydans (strain 621H) (Gluconobacter suboxydans).